Consider the following 281-residue polypeptide: Translation initiation factor IF3-4, chloroplastic (281 aa).

The transit peptide at 1–51 (MAGITSTVGFNAILAGATKTVSHPVKSKLFGLRLCVPEFSIVSLSPYHHRR) directs the protein to the chloroplast. 2 disordered regions span residues 63–86 (GGGG…DDSL) and 253–281 (KVQE…TQDI). Composition is skewed to basic and acidic residues over residues 70–79 (PGDRRGRQKE) and 253–270 (KVQE…DDKV).

The protein belongs to the IF-3 family. In terms of assembly, monomer.

The protein localises to the plastid. Its subcellular location is the chloroplast. In terms of biological role, chloroplast translation initiation factor that is essential for the coordination of leaf and chloroplast development. IF-3 binds to the 30S ribosomal subunit and shifts the equilibrium between 70S ribosomes and their 50S and 30S subunits in favor of the free subunits, thus enhancing the availability of 30S subunits on which protein synthesis initiation begins. This is Translation initiation factor IF3-4, chloroplastic from Arabidopsis thaliana (Mouse-ear cress).